Consider the following 770-residue polypeptide: MDFSKFLADDFDVKDWINAAFRAGPKDGAAGKADGHAATLVMKLQLFIQEVNHAVEETSLQALQNMPKVLRDVEALKQEASFLKEQMILVKEDIKKFEQDTSQSMQVLVEIDQVKSRMQLAAESLQEADKWSTLSADIEETFKTQDIAVISAKLTGMQSSLMMLVDTPDYSEKCVHLEALKNRLEALASPQIVAAFTSQSVDQSKVFVKVFTEIDRMPQLLAYYYKCHKVQLLATWQELCQRDLPLDRQLTGLYHALLGAWHTQTQWATQVFKNPYEVVTVLLIQTLGALVPSLPMCLSEAVERAGPELELTRLLEFYDTTAHFAKGLEMALLPHLQDHNLVKVVELVDAVYGPYKPYQLKYGDLEESNLLIQISAVPLEHGEVIDCVQELSQSVHKLFGLASAAVDRCAKFTNGLGTCGLLTALKSLFTKYVSHFTNALQSIRKKCKLDDIPPNSLFQEDWTAFQNSVRIIATCGELLRQCGDFEQQLANRILSTAGKYLSDSYSPRSLAGFQDSILTDKKSPAKNPWQEYNYLQKDNPAEYANLMEILYTLKEKGSSNHNLLSVSRTALTRLNQQAHQLAFDSVFLRIKQQLLLVSRMDSWNTAGIGETLTDDLPAFSLTPLEYISNIGQYIMSLPLNLEPFVTQEDSALELALHAGKLPFPPEQGEELPELDNMADNWLGSIARATMQTYCDGILQIPAVTPHSTKQLATDIDYLINVMDALGLQPSRTLQNIATLLKAKPEEYRQVSKGLPRRLAATVATMRGVNY.

It belongs to the COG7 family. In terms of assembly, component of the conserved oligomeric Golgi complex which is composed of eight different subunits and is required for normal Golgi morphology and localization.

Its subcellular location is the golgi apparatus membrane. Functionally, required for normal Golgi function. This is Conserved oligomeric Golgi complex subunit 7 (Cog7) from Rattus norvegicus (Rat).